The sequence spans 822 residues: AP-1 complex subunit gamma-1 (822 aa).

A disordered region spans residues 597–628 (EIVQTNGETEPAPLETKPPPSGPQPTSQANDL). A GAE domain is found at 702–817 (AGIPSITAYS…QDLAEVNNFP (116 aa)).

The protein belongs to the adaptor complexes large subunit family. As to quaternary structure, adaptor protein complex 1 (AP-1) is a heterotetramer composed of two large adaptins (gamma-type subunit AP1G1 and beta-type subunit AP1B1), a medium adaptin (mu-type subunit AP1M1 or AP1M2) and a small adaptin (sigma-type subunit AP1S1 or AP1S2 or AP1S3). Interacts (via GAE domain) with RABEP1. Interacts with SYNRG/gamma-synergin. Interacts with EPS15. Interacts (via GAE domain) with AP1AR (via coiled-coil domain). Interacts with CLN3 (via dileucine motif); this interaction facilitates lysosomal targeting. Interacts (via GAE domain) with AFTPH/aftiphilin; the interaction is required to recruit AFTPH/aftiphilin to the perinuclear region of the cell. Widely expressed.

It localises to the golgi apparatus. The protein resides in the cytoplasmic vesicle. The protein localises to the clathrin-coated vesicle membrane. Its subcellular location is the cytoplasm. It is found in the perinuclear region. It localises to the clathrin-coated vesicle. The protein resides in the membrane. The protein localises to the clathrin-coated pit. Functionally, subunit of clathrin-associated adaptor protein complex 1 that plays a role in protein sorting in the late-Golgi/trans-Golgi network (TGN) and/or endosomes. The AP complexes mediate both the recruitment of clathrin to membranes and the recognition of sorting signals within the cytosolic tails of transmembrane cargo molecules. In association with AFTPH/aftiphilin in the aftiphilin/p200/gamma-synergin complex, involved in the trafficking of transferrin from early to recycling endosomes, and the membrane trafficking of furin and the lysosomal enzyme cathepsin D between the trans-Golgi network (TGN) and endosomes. In Homo sapiens (Human), this protein is AP-1 complex subunit gamma-1 (AP1G1).